The sequence spans 32 residues: ilv operon leader peptide (32 aa).

The protein is ilv operon leader peptide (ilvL) of Edwardsiella tarda.